The sequence spans 506 residues: Lysine--tRNA ligase (506 aa).

The Mg(2+) site is built by Glu-416 and Glu-423.

The protein belongs to the class-II aminoacyl-tRNA synthetase family. As to quaternary structure, homodimer. The cofactor is Mg(2+).

It localises to the cytoplasm. It carries out the reaction tRNA(Lys) + L-lysine + ATP = L-lysyl-tRNA(Lys) + AMP + diphosphate. This is Lysine--tRNA ligase from Pelotomaculum thermopropionicum (strain DSM 13744 / JCM 10971 / SI).